Reading from the N-terminus, the 475-residue chain is Ribulose bisphosphate carboxylase large chain (475 aa).

The propeptide occupies 1–2 (MS). Residue proline 3 is modified to N-acetylproline. Lysine 14 is subject to N6,N6,N6-trimethyllysine. Residues asparagine 123 and threonine 173 each contribute to the substrate site. Lysine 175 serves as the catalytic Proton acceptor. Lysine 177 is a substrate binding site. Mg(2+)-binding residues include lysine 201, aspartate 203, and glutamate 204. Lysine 201 carries the post-translational modification N6-carboxylysine. Histidine 294 acts as the Proton acceptor in catalysis. Residues arginine 295, histidine 327, and serine 379 each contribute to the substrate site.

This sequence belongs to the RuBisCO large chain family. Type I subfamily. As to quaternary structure, heterohexadecamer of 8 large chains and 8 small chains; disulfide-linked. The disulfide link is formed within the large subunit homodimers. Mg(2+) serves as cofactor. Post-translationally, the disulfide bond which can form in the large chain dimeric partners within the hexadecamer appears to be associated with oxidative stress and protein turnover.

The protein localises to the plastid. It localises to the chloroplast. It catalyses the reaction 2 (2R)-3-phosphoglycerate + 2 H(+) = D-ribulose 1,5-bisphosphate + CO2 + H2O. The catalysed reaction is D-ribulose 1,5-bisphosphate + O2 = 2-phosphoglycolate + (2R)-3-phosphoglycerate + 2 H(+). In terms of biological role, ruBisCO catalyzes two reactions: the carboxylation of D-ribulose 1,5-bisphosphate, the primary event in carbon dioxide fixation, as well as the oxidative fragmentation of the pentose substrate in the photorespiration process. Both reactions occur simultaneously and in competition at the same active site. The protein is Ribulose bisphosphate carboxylase large chain of Carpinus caroliniana (American hornbeam).